A 711-amino-acid chain; its full sequence is MND1-interacting protein 1 (711 aa).

A coiled-coil region spans residues 390-648 (EWAQKNAMQA…LEGSYDNEAN (259 aa)). Disordered regions lie at residues 552-571 (EALAQMEEEQRSKEAAEGHN) and 602-622 (RLKASSDSDSSHISNNAWKPK). Positions 602-611 (RLKASSDSDS) are enriched in basic and acidic residues. The RING-type zinc finger occupies 653 to 697 (CIICMKDEVSVVFLPCAHQVVCGSCSDSFFASNNGGSKVTCPCCR).

In terms of assembly, interacts (via C-terminal domain) with MND1 and HOP2. Interacts with XRI1 (via C-terminal domain).

The protein is MND1-interacting protein 1 (MIP1) of Arabidopsis thaliana (Mouse-ear cress).